The primary structure comprises 240 residues: Lysoplasmalogenase TMEM86A (240 aa).

The Cytoplasmic portion of the chain corresponds to 1–21; the sequence is MVSPVTVVKSEGPKLVPFFKA. The chain crosses the membrane as a helical span at residues 22–42; it reads TCVYFVLWLPSSSPSWVSTLI. Position 43 (Lys43) is a topological domain, extracellular. A helical transmembrane segment spans residues 44 to 64; the sequence is CLPIFCLWLFLLAHGLGFLLA. Over 65–70 the chain is Cytoplasmic; the sequence is HPSATR. A helical membrane pass occupies residues 71 to 91; it reads IFVGLVFSAVGDAFLIWQDQG. Position 92 (Tyr92) is a topological domain, extracellular. The helical transmembrane segment at 93–113 threads the bilayer; that stretch reads FVHGLLMFAVTHMFYASAFGM. Over 114–115 the chain is Cytoplasmic; the sequence is QP. A helical membrane pass occupies residues 116-136; sequence LALRTGLVMAALSGLCYALLY. Over 137–138 the chain is Extracellular; it reads PC. The helical transmembrane segment at 139 to 159 threads the bilayer; it reads LSGAFTYLVGVYVALIGFMGW. At 160-174 the chain is on the cytoplasmic side; the sequence is RAMAGLRLAGADWRW. A helical transmembrane segment spans residues 175-195; that stretch reads TELAAGSGALFFIISDLTIAL. Topologically, residues 196–206 are extracellular; sequence NKFCFPVPYSR. Residues 207 to 227 traverse the membrane as a helical segment; that stretch reads ALIMSTYYVAQMLVALSAVES. Topologically, residues 228-240 are cytoplasmic; sequence REPVEHYRLTKAN.

Belongs to the TMEM86 family. Expressed in the macrophages.

It is found in the endoplasmic reticulum membrane. It carries out the reaction a 1-O-(1Z-alkenyl)-sn-glycero-3-phosphocholine + H2O = a 2,3-saturated aldehyde + sn-glycerol 3-phosphocholine. The enzyme catalyses a 1-O-(1Z-alkenyl)-sn-glycero-3-phosphoethanolamine + H2O = a 2,3-saturated aldehyde + sn-glycero-3-phosphoethanolamine. Catalyzes the hydrolysis of the vinyl ether bond of choline or ethanolamine lysoplasmalogens, forming fatty aldehyde and glycerophosphocholine or glycerophosphoethanolamine, respectively and is specific for the sn-2-deacylated (lyso) form of plasmalogen. Plays an important role in lysoplasmalogen metabolism in the adipocyte tissue and macrophages. This Homo sapiens (Human) protein is Lysoplasmalogenase TMEM86A (TMEM86A).